The sequence spans 506 residues: Cobyric acid synthase (506 aa).

A GATase cobBQ-type domain is found at 251–448 (DIDIAVVQVP…LHGLFDSDAF (198 aa)). Residue C332 is the Nucleophile of the active site. H440 is an active-site residue.

The protein belongs to the CobB/CobQ family. CobQ subfamily.

The protein operates within cofactor biosynthesis; adenosylcobalamin biosynthesis. Functionally, catalyzes amidations at positions B, D, E, and G on adenosylcobyrinic A,C-diamide. NH(2) groups are provided by glutamine, and one molecule of ATP is hydrogenolyzed for each amidation. The sequence is that of Cobyric acid synthase from Citrobacter koseri (strain ATCC BAA-895 / CDC 4225-83 / SGSC4696).